A 465-amino-acid polypeptide reads, in one-letter code: Ribosomal oxygenase 2 (465 aa).

The JmjC domain maps to 139–271 (QPQRFKDELW…NSWGDFLLDT (133 aa)). Fe cation contacts are provided by H179, D181, and H240. At S309 the chain carries Phosphoserine.

It belongs to the ROX family. MINA53 subfamily. The cofactor is Fe(2+).

The protein localises to the nucleus. It localises to the nucleolus. It carries out the reaction L-histidyl-[ribosomal protein uL15] + 2-oxoglutarate + O2 = (3S)-3-hydroxy-L-histidyl-[ribosomal protein uL15] + succinate + CO2. It catalyses the reaction L-histidyl-[protein] + 2-oxoglutarate + O2 = (3S)-3-hydroxy-L-histidyl-[protein] + succinate + CO2. Oxygenase that can act as both a histone lysine demethylase and a ribosomal histidine hydroxylase. Is involved in the demethylation of trimethylated 'Lys-9' on histone H3 (H3K9me3), leading to an increase in ribosomal RNA expression. Also catalyzes the hydroxylation of 60S ribosomal protein L27a on 'His-39'. May play an important role in cell growth and survival. May be involved in ribosome biogenesis, most likely during the assembly process of pre-ribosomal particles. This Pongo abelii (Sumatran orangutan) protein is Ribosomal oxygenase 2 (RIOX2).